A 973-amino-acid polypeptide reads, in one-letter code: Valine--tRNA ligase (973 aa).

Residues 57-67 (PNVTGSLHMGH) carry the 'HIGH' region motif. The short motif at 569-573 (KMSKS) is the 'KMSKS' region element. Lysine 572 lines the ATP pocket. Residues 901–970 (MAGLIDKEAE…AKILEQKIQI (70 aa)) are a coiled coil.

This sequence belongs to the class-I aminoacyl-tRNA synthetase family. ValS type 1 subfamily. Monomer.

The protein localises to the cytoplasm. The catalysed reaction is tRNA(Val) + L-valine + ATP = L-valyl-tRNA(Val) + AMP + diphosphate. Its function is as follows. Catalyzes the attachment of valine to tRNA(Val). As ValRS can inadvertently accommodate and process structurally similar amino acids such as threonine, to avoid such errors, it has a 'posttransfer' editing activity that hydrolyzes mischarged Thr-tRNA(Val) in a tRNA-dependent manner. This chain is Valine--tRNA ligase, found in Colwellia psychrerythraea (strain 34H / ATCC BAA-681) (Vibrio psychroerythus).